We begin with the raw amino-acid sequence, 213 residues long: dITP/XTP pyrophosphatase (213 aa).

Residue 17 to 22 participates in substrate binding; sequence SNNAGK. The active-site Proton acceptor is Asp78. Asp78 contacts Mg(2+). Substrate contacts are provided by residues Ser79, 164 to 167, Lys187, and 192 to 193; these read FGYD and HR.

Belongs to the HAM1 NTPase family. As to quaternary structure, homodimer. Requires Mg(2+) as cofactor.

It carries out the reaction XTP + H2O = XMP + diphosphate + H(+). The catalysed reaction is dITP + H2O = dIMP + diphosphate + H(+). The enzyme catalyses ITP + H2O = IMP + diphosphate + H(+). In terms of biological role, pyrophosphatase that catalyzes the hydrolysis of nucleoside triphosphates to their monophosphate derivatives, with a high preference for the non-canonical purine nucleotides XTP (xanthosine triphosphate), dITP (deoxyinosine triphosphate) and ITP. Seems to function as a house-cleaning enzyme that removes non-canonical purine nucleotides from the nucleotide pool, thus preventing their incorporation into DNA/RNA and avoiding chromosomal lesions. The sequence is that of dITP/XTP pyrophosphatase from Bordetella parapertussis (strain 12822 / ATCC BAA-587 / NCTC 13253).